A 153-amino-acid chain; its full sequence is Probable inactive ribonuclease-like protein 13 (153 aa).

Residues 1–22 form the signal peptide; the sequence is MAPDVAWLLVLPLVFRPTLVTG.

This sequence belongs to the pancreatic ribonuclease family.

The protein resides in the secreted. Functionally, does not exhibit any ribonuclease activity. The sequence is that of Probable inactive ribonuclease-like protein 13 (Rnase13) from Mus musculus (Mouse).